A 246-amino-acid polypeptide reads, in one-letter code: MDSRVYIIKFDNWGFMVNLMNKIQILRKISQTLFFVRALIVTGFYLSIVGFIKRFIIGDRILATIITKIIAIVLAFIAGRVFCGWMCPFGFLFNLVYELRVKLFKLKKLPTVDEKIHNKLIYFKYVVLILVVLAYLSGVKISGYTLAYLLLALFLVLGFIYPMFFCRYVCPVGSLLSIFARFSIFKLKLDENKCVGCRLCERKCPMQIKITEKIDQMECIRCFECMSVCKKGALSFSAFTKNTKKE.

The next 4 helical transmembrane spans lie at 32–52 (TLFF…VGFI), 69–89 (IIAI…MCPF), 121–141 (IYFK…GVKI), and 146–166 (LAYL…MFFC). 4Fe-4S ferredoxin-type domains are found at residues 185–213 (FKLK…ITEK) and 210–239 (ITEK…FSAF). [4Fe-4S] cluster contacts are provided by Cys-194, Cys-197, Cys-200, Cys-204, Cys-219, Cys-222, Cys-225, and Cys-229.

It is found in the cell membrane. This is an uncharacterized protein from Methanocaldococcus jannaschii (strain ATCC 43067 / DSM 2661 / JAL-1 / JCM 10045 / NBRC 100440) (Methanococcus jannaschii).